The chain runs to 521 residues: GMP synthase [glutamine-hydrolyzing] (521 aa).

The Glutamine amidotransferase type-1 domain maps to 5 to 197 (KILILDFGSQ…VLDICGAQPG (193 aa)). The active-site Nucleophile is C81. Active-site residues include H171 and E173. The GMPS ATP-PPase domain occupies 198 to 390 (WTMPNYIEEA…LGLPREMVYR (193 aa)). 225–231 (SGGVDSS) is a binding site for ATP.

As to quaternary structure, homodimer.

It catalyses the reaction XMP + L-glutamine + ATP + H2O = GMP + L-glutamate + AMP + diphosphate + 2 H(+). Its pathway is purine metabolism; GMP biosynthesis; GMP from XMP (L-Gln route): step 1/1. Catalyzes the synthesis of GMP from XMP. The protein is GMP synthase [glutamine-hydrolyzing] of Neisseria gonorrhoeae (strain ATCC 700825 / FA 1090).